The chain runs to 883 residues: Phosphoenolpyruvate carboxylase (883 aa).

Active-site residues include His-138 and Lys-546.

Belongs to the PEPCase type 1 family. Requires Mg(2+) as cofactor.

It carries out the reaction oxaloacetate + phosphate = phosphoenolpyruvate + hydrogencarbonate. Its function is as follows. Forms oxaloacetate, a four-carbon dicarboxylic acid source for the tricarboxylic acid cycle. The protein is Phosphoenolpyruvate carboxylase of Escherichia coli O45:K1 (strain S88 / ExPEC).